The following is a 63-amino-acid chain: Large ribosomal subunit protein uL29 (63 aa).

It belongs to the universal ribosomal protein uL29 family.

In Glaesserella parasuis serovar 5 (strain SH0165) (Haemophilus parasuis), this protein is Large ribosomal subunit protein uL29.